A 415-amino-acid chain; its full sequence is Serine hydroxymethyltransferase 2 (415 aa).

Residues Leu121 and 125-127 (GHL) contribute to the (6S)-5,6,7,8-tetrahydrofolate site. At Lys229 the chain carries N6-(pyridoxal phosphate)lysine.

It belongs to the SHMT family. As to quaternary structure, homodimer. Pyridoxal 5'-phosphate serves as cofactor.

The protein localises to the cytoplasm. It carries out the reaction (6R)-5,10-methylene-5,6,7,8-tetrahydrofolate + glycine + H2O = (6S)-5,6,7,8-tetrahydrofolate + L-serine. It functions in the pathway one-carbon metabolism; tetrahydrofolate interconversion. The protein operates within amino-acid biosynthesis; glycine biosynthesis; glycine from L-serine: step 1/1. Functionally, catalyzes the reversible interconversion of serine and glycine with tetrahydrofolate (THF) serving as the one-carbon carrier. This reaction serves as the major source of one-carbon groups required for the biosynthesis of purines, thymidylate, methionine, and other important biomolecules. Also exhibits THF-independent aldolase activity toward beta-hydroxyamino acids, producing glycine and aldehydes, via a retro-aldol mechanism. This chain is Serine hydroxymethyltransferase 2, found in Bordetella bronchiseptica (strain ATCC BAA-588 / NCTC 13252 / RB50) (Alcaligenes bronchisepticus).